The chain runs to 710 residues: Putative membrane protein IgaA homolog (710 aa).

A topological domain (periplasmic) is located at residue Met1. The chain crosses the membrane as a helical span at residues 2-22; it reads STILIFIAALLACSLLAIWRF. The Cytoplasmic segment spans residues 23–204; that stretch reads RVKSRRGSLP…YALSRPAGLR (182 aa). The next 2 membrane-spanning stretches (helical) occupy residues 205–225 and 226–246; these read EALLIVASFLLFFFCLITPDV and FVPWMIGGAILLLAAGLWGLF. At 247-339 the chain is on the cytoplasmic side; it reads APPSKSALRE…KNFPLQHWLR (93 aa). A helical membrane pass occupies residues 340–360; that stretch reads STVIAIGSLLVLFMLLFWIPL. At 361 to 656 the chain is on the periplasmic side; that stretch reads DMPIKFTLSW…PDKSGWWRYL (296 aa). Residues 657–677 form a helical membrane-spanning segment; the sequence is GTTLLMLAMIVSAVYNGIQAF. At 678-710 the chain is on the cytoplasmic side; that stretch reads RRYQRHRTRMADIQEYYESCLNPRLTVSPENLI.

It belongs to the IgaA family.

Its subcellular location is the cell inner membrane. The chain is Putative membrane protein IgaA homolog (yrfF) from Salmonella typhi.